Here is a 199-residue protein sequence, read N- to C-terminus: Urease accessory protein UreG (199 aa).

8-15 provides a ligand contact to GTP; the sequence is GPVGSGKT.

Belongs to the SIMIBI class G3E GTPase family. UreG subfamily. In terms of assembly, homodimer. UreH, UreF and UreG form a complex that acts as a GTP-hydrolysis-dependent molecular chaperone, activating the urease apoprotein by helping to assemble the nickel containing metallocenter of UreC. The UreE protein probably delivers the nickel.

It localises to the cytoplasm. Facilitates the functional incorporation of the urease nickel metallocenter. This process requires GTP hydrolysis, probably effectuated by UreG. This chain is Urease accessory protein UreG, found in Helicobacter pylori (strain J99 / ATCC 700824) (Campylobacter pylori J99).